A 201-amino-acid polypeptide reads, in one-letter code: Peptidyl-tRNA hydrolase (201 aa).

Tyrosine 15 provides a ligand contact to tRNA. Histidine 20 functions as the Proton acceptor in the catalytic mechanism. Residues tyrosine 66, asparagine 68, and asparagine 114 each contribute to the tRNA site.

It belongs to the PTH family. In terms of assembly, monomer.

The protein localises to the cytoplasm. It catalyses the reaction an N-acyl-L-alpha-aminoacyl-tRNA + H2O = an N-acyl-L-amino acid + a tRNA + H(+). Hydrolyzes ribosome-free peptidyl-tRNAs (with 1 or more amino acids incorporated), which drop off the ribosome during protein synthesis, or as a result of ribosome stalling. Its function is as follows. Catalyzes the release of premature peptidyl moieties from peptidyl-tRNA molecules trapped in stalled 50S ribosomal subunits, and thus maintains levels of free tRNAs and 50S ribosomes. This Burkholderia mallei (strain NCTC 10247) protein is Peptidyl-tRNA hydrolase.